We begin with the raw amino-acid sequence, 110 residues long: uncharacterized protein (110 aa).

The next 2 membrane-spanning stretches (helical) occupy residues 6–26 and 38–58; these read VSLYILCFALGLRNTFLIYNV and TSGPIGDTIFLIYGIIIIIGP.

It localises to the membrane. This is an uncharacterized protein from Saccharomyces cerevisiae (strain ATCC 204508 / S288c) (Baker's yeast).